We begin with the raw amino-acid sequence, 191 residues long: Orotate phosphoribosyltransferase (191 aa).

Residue 114-122 (EDVVTTGKS) coordinates 5-phospho-alpha-D-ribose 1-diphosphate. 2 residues coordinate orotate: T118 and R146.

Belongs to the purine/pyrimidine phosphoribosyltransferase family. PyrE subfamily. Homodimer. Mg(2+) serves as cofactor.

It carries out the reaction orotidine 5'-phosphate + diphosphate = orotate + 5-phospho-alpha-D-ribose 1-diphosphate. The protein operates within pyrimidine metabolism; UMP biosynthesis via de novo pathway; UMP from orotate: step 1/2. In terms of biological role, catalyzes the transfer of a ribosyl phosphate group from 5-phosphoribose 1-diphosphate to orotate, leading to the formation of orotidine monophosphate (OMP). The chain is Orotate phosphoribosyltransferase from Clostridium botulinum (strain Loch Maree / Type A3).